A 731-amino-acid chain; its full sequence is SUN domain-containing protein 2 (731 aa).

Disordered regions lie at residues 1-69 and 106-142; these read MSRR…SHTS and SGDL…FGSS. Residues 1–128 form an LMNA-binding region; it reads MSRRSQRLTR…GSESSKANGL (128 aa). Residues 1-226 are Nuclear-facing; sequence MSRRSQRLTR…SRHFSLNLKS (226 aa). S12 is subject to Phosphoserine. Low complexity predominate over residues 18–33; that stretch reads GGSSSSGASSVAGSQG. Phosphoserine occurs at positions 39 and 55. T117 carries the phosphothreonine modification. Phosphoserine occurs at positions 120, 123, and 147. The helical transmembrane segment at 227–247 threads the bilayer; sequence FLWFLLLLLLLTGLTYGAWHF. The Perinuclear space portion of the chain corresponds to 248-731; the sequence is YPLGLQTLQP…RFRVHGEPAH (484 aa). Coiled coils occupy residues 396–452 and 486–519; these read QESE…VADE and RSGL…KSAR. Positions 521 to 731 are sufficient for interaction with SYNE1 and SYNE2; that stretch reads AAASLGQILQ…RFRVHGEPAH (211 aa). The 162-residue stretch at 569–730 folds into the SUN domain; that stretch reads GASVISTRCS…YRFRVHGEPA (162 aa). N650 carries N-linked (GlcNAc...) asparagine glycosylation.

As to quaternary structure, core component of the LINC complex which is composed of inner nuclear membrane SUN domain-containing proteins coupled to outer nuclear membrane KASH domain-containing nesprins. SUN and KASH domain-containing proteins seem to bind each other promiscuously; however, differentially expression of LINC complex constituents is giving rise to specific assemblies. At least SUN1/2-containing core LINC complexes are proposed to be hexameric composed of three protomers of each KASH and SUN domain-containing protein. Interacts with SYNE2; the SUN2:SYNE2/KASH2 LINC complex is a heterohexamer; the homotrimeric cloverleave-like conformation of the SUN domain is a prerequisite for LINC complex formation in which three separate SYNE2/KASH2 peptides bind at the interface of adjacent SUN domains. Component of a probable SUN2:KASH5 LINC complex. Interacts with SYNE1 and SYNE3; probably forming respective LINC complexes. Interacts with A-type lamin. Interaction with lamins B1 and C is hardly detectable. Interacts with EMD. Interacts with RAB5A. Interacts with TMEM43 and TMEM201. Interacts with IRAG2. The disulfide bond with SYNE2 is required for stability of the SUN2:SYNE2/KASH2 LINC complex under tensile forces though not required for the interaction. The disulfide bond is proposed to be conserved in LINC complexes involved in force transmission. Highly expressed in heart, placenta and muscle.

The protein localises to the nucleus inner membrane. Its subcellular location is the nucleus envelope. It localises to the endosome membrane. As a component of the LINC (LInker of Nucleoskeleton and Cytoskeleton) complex, involved in the connection between the nuclear lamina and the cytoskeleton. The nucleocytoplasmic interactions established by the LINC complex play an important role in the transmission of mechanical forces across the nuclear envelope and in nuclear movement and positioning. Specifically, SYNE2 and SUN2 assemble in arrays of transmembrane actin-associated nuclear (TAN) lines which are bound to F-actin cables and couple the nucleus to retrograde actin flow during actin-dependent nuclear movement. Required for interkinetic nuclear migration (INM) and essential for nucleokinesis and centrosome-nucleus coupling during radial neuronal migration in the cerebral cortex and during glial migration. Required for nuclear migration in retinal photoreceptor progenitors implicating association with cytoplasmic dynein-dynactin and kinesin motor complexes, and probably B-type lamins; SUN1 and SUN2 seem to act redundantly. The SUN1/2:KASH5 LINC complex couples telomeres to microtubules during meiosis; SUN1 and SUN2 seem to act at least partial redundantly. Anchors chromosome movement in the prophase of meiosis and is involved in selective gene expression of coding and non-coding RNAs needed for gametogenesis. Required for telomere attachment to nuclear envelope and gametogenesis. May also function on endocytic vesicles as a receptor for Rab5-GDP and participate in the activation of Rab5. This chain is SUN domain-containing protein 2, found in Mus musculus (Mouse).